We begin with the raw amino-acid sequence, 852 residues long: Cell surface glycoprotein (852 aa).

The N-terminal stretch at 1–34 (MTDTTGKLRAVLLTALMVGSVIGAGVAFTGGAAA) is a signal peptide. N-linked (GalNAc...) (glycosaminoglycan) asparagine glycosylation occurs at asparagine 36. The disordered stretch occupies residues 84–131 (KLDNEKEVSPATLSRTGGSDEGVPLQMPIPEDQSTGSYDSNGPDNDEA). The span at 115–126 (DQSTGSYDSNGP) shows a compositional bias: polar residues. Asparagine 339, asparagine 398, asparagine 438, asparagine 513, asparagine 643, asparagine 727, asparagine 751, and asparagine 787 each carry an N-linked (Glc...) asparagine glycan. Residues 772–828 (ELEEPDQTTVDQPENNQTMTTTMTETTTETTTEMTTTQENTTENGSEGTSDGESGGS) form a disordered region. Positions 785-823 (ENNQTMTTTMTETTTETTTEMTTTQENTTENGSEGTSDG) are enriched in low complexity. O-linked (Gal...) threonine glycans are attached at residues threonine 789, threonine 791, threonine 792, threonine 793, threonine 795, threonine 797, threonine 798, threonine 799, threonine 801, threonine 802, threonine 803, threonine 806, threonine 807, and threonine 808. Asparagine 811 carries N-linked (Glc...) asparagine glycosylation. O-linked (Gal...) threonine glycosylation is found at threonine 812 and threonine 813. N-linked (Glc...) asparagine glycosylation is present at asparagine 815. Residues 829–849 (IPGFGVGVALVAVLGAALLAL) traverse the membrane as a helical segment. The short motif at 830–832 (PGF) is the PGF sorting signal element.

It belongs to the halobacterial S-layer protein family. Post-translationally, N-linked glycan at Asn-36 consists of a glycosaminoglycan chain, constructed by a repeating sulfated pentasaccharide block composed of GlcNAc, GalNAc, Gal, GalA, 3-O-methyl-GalA, and sulfate in the molar ratio of 1:1:1:1:1:2; the other N-linked glycans contain Glc, GlcA and IdoA. O-linked glycans consist of Glc-Gal disaccharides. In terms of processing, the C-terminus (residues 770-778) is lipidated with diphytanylglyceryl phosphate. Post-translationally, cleaved by the archaeosortase ArtA at the C-terminus, with removal of a short hydrophobic segment.

The protein localises to the secreted. It localises to the cell wall. The protein resides in the S-layer. It is found in the cell membrane. S-layer protein. The S-layer is a paracrystalline mono-layered assembly of proteins which coat the surface of the cell. The polypeptide is Cell surface glycoprotein (csg) (Halobacterium salinarum (strain ATCC 29341 / DSM 671 / R1)).